Here is a 520-residue protein sequence, read N- to C-terminus: GMP synthase [glutamine-hydrolyzing] (520 aa).

The 194-residue stretch at 9-202 (TILIIDFGSQ…VHRIVGVKPG (194 aa)) folds into the Glutamine amidotransferase type-1 domain. Residue Cys86 is the Nucleophile of the active site. Residues His176 and Glu178 contribute to the active site. Residues 203–395 (WTMGAYREQA…LGLPDSFIGR (193 aa)) form the GMPS ATP-PPase domain. Residue 230–236 (SGGVDSS) participates in ATP binding.

Homodimer.

It catalyses the reaction XMP + L-glutamine + ATP + H2O = GMP + L-glutamate + AMP + diphosphate + 2 H(+). The protein operates within purine metabolism; GMP biosynthesis; GMP from XMP (L-Gln route): step 1/1. Catalyzes the synthesis of GMP from XMP. The chain is GMP synthase [glutamine-hydrolyzing] from Brucella canis (strain ATCC 23365 / NCTC 10854 / RM-666).